Here is a 220-residue protein sequence, read N- to C-terminus: Ras-related protein Rab-11B (220 aa).

18 to 25 (GDSGVGKS) serves as a coordination point for GTP. An Effector region motif is present at residues 40–48 (KLSTIGVEF). GTP is bound by residues 66-70 (DTAGQ) and 124-127 (NKSD). Residues cysteine 219 and cysteine 220 are each lipidated (S-geranylgeranyl cysteine).

Belongs to the small GTPase superfamily. Rab family.

The protein resides in the cell membrane. This is Ras-related protein Rab-11B (rab11B) from Dictyostelium discoideum (Social amoeba).